A 104-amino-acid chain; its full sequence is Probable head completion protein 1 (104 aa).

This sequence belongs to the skunalikevirus head completion protein 1 family.

It localises to the virion. In terms of biological role, probable head completion protein that exhibits an open central channel for viral DNA ejection. Part of the head-tail connector by binding to the portal protein and to the head completion protein 2. Plays a role in morphogenesis of the virion capsid after genome packaging. This is Probable head completion protein 1 from Lactococcus lactis (Lactococcus lactis bacteriophage p2).